A 425-amino-acid chain; its full sequence is Histone-binding protein RBBP4 (425 aa).

At Ala2 the chain carries N-acetylalanine. WD repeat units follow at residues 32–125 (YDLV…NHEG), 126–175 (EVNR…RLRG), 176–223 (HQKE…KTIF), 225–270 (GHTA…HSVD), 271–314 (AHTA…HSFE), 315–371 (SHKD…FIHG), and 372–404 (GHTAKISDFSWNPNEPWVICSVSEDNIMQVWQM).

It belongs to the WD repeat RBAP46/RBAP48/MSI1 family. In terms of assembly, binds directly to histone H4, probably via helix 1 of the histone fold, a region that is not accessible when histone H4 is in chromatin. Forms a large corepressor complex that contains ncor1, sin3a and possibly sin3b, histone deacetylases hdac2, hdac1, rbbp4 and possibly rbbp7.

The protein resides in the nucleus. The protein localises to the chromosome. It localises to the telomere. Functionally, core histone-binding subunit that may target chromatin assembly factors, chromatin remodeling factors and histone deacetylases to their histone substrates in a manner that is regulated by nucleosomal DNA. Component of several complexes which regulate chromatin metabolism. The chain is Histone-binding protein RBBP4 (rbbp4) from Xenopus tropicalis (Western clawed frog).